A 357-amino-acid polypeptide reads, in one-letter code: UDP-N-acetylglucosamine--N-acetylmuramyl-(pentapeptide) pyrophosphoryl-undecaprenol N-acetylglucosamine transferase (357 aa).

UDP-N-acetyl-alpha-D-glucosamine-binding positions include 13 to 15 (SAG), Arg-166, Ser-196, and Gln-291.

The protein belongs to the glycosyltransferase 28 family. MurG subfamily.

It is found in the cell membrane. It carries out the reaction di-trans,octa-cis-undecaprenyl diphospho-N-acetyl-alpha-D-muramoyl-L-alanyl-D-glutamyl-meso-2,6-diaminopimeloyl-D-alanyl-D-alanine + UDP-N-acetyl-alpha-D-glucosamine = di-trans,octa-cis-undecaprenyl diphospho-[N-acetyl-alpha-D-glucosaminyl-(1-&gt;4)]-N-acetyl-alpha-D-muramoyl-L-alanyl-D-glutamyl-meso-2,6-diaminopimeloyl-D-alanyl-D-alanine + UDP + H(+). It participates in cell wall biogenesis; peptidoglycan biosynthesis. In terms of biological role, cell wall formation. Catalyzes the transfer of a GlcNAc subunit on undecaprenyl-pyrophosphoryl-MurNAc-pentapeptide (lipid intermediate I) to form undecaprenyl-pyrophosphoryl-MurNAc-(pentapeptide)GlcNAc (lipid intermediate II). This is UDP-N-acetylglucosamine--N-acetylmuramyl-(pentapeptide) pyrophosphoryl-undecaprenol N-acetylglucosamine transferase from Clostridium perfringens (strain ATCC 13124 / DSM 756 / JCM 1290 / NCIMB 6125 / NCTC 8237 / Type A).